The following is a 248-amino-acid chain: 1-(5-phosphoribosyl)-5-[(5-phosphoribosylamino)methylideneamino] imidazole-4-carboxamide isomerase (248 aa).

The active-site Proton acceptor is the Asp-8. Asp-130 acts as the Proton donor in catalysis.

This sequence belongs to the HisA/HisF family.

Its subcellular location is the cytoplasm. It catalyses the reaction 1-(5-phospho-beta-D-ribosyl)-5-[(5-phospho-beta-D-ribosylamino)methylideneamino]imidazole-4-carboxamide = 5-[(5-phospho-1-deoxy-D-ribulos-1-ylimino)methylamino]-1-(5-phospho-beta-D-ribosyl)imidazole-4-carboxamide. The protein operates within amino-acid biosynthesis; L-histidine biosynthesis; L-histidine from 5-phospho-alpha-D-ribose 1-diphosphate: step 4/9. This chain is 1-(5-phosphoribosyl)-5-[(5-phosphoribosylamino)methylideneamino] imidazole-4-carboxamide isomerase, found in Alkalilimnicola ehrlichii (strain ATCC BAA-1101 / DSM 17681 / MLHE-1).